Reading from the N-terminus, the 113-residue chain is U11-theraphotoxin-Hhn1d (113 aa).

Positions 1–21 (MNTVRVTFLLVFVVAVSLGQA) are cleaved as a signal peptide. A propeptide spanning residues 22-74 (DKDENRMEMKDKTEQGKSYLHFAENLLLQKLEDVEAKLLEKDSEKSINSRQKR) is cleaved from the precursor. 3 disulfide bridges follow: Cys75-Cys90, Cys82-Cys95, and Cys89-Cys110.

This sequence belongs to the neurotoxin 14 (magi-1) family. 01 (HNTX-16) subfamily. Expressed by the venom gland.

It is found in the secreted. In terms of biological role, probable ion channel inhibitor. This chain is U11-theraphotoxin-Hhn1d, found in Cyriopagopus hainanus (Chinese bird spider).